The primary structure comprises 80 residues: Exodeoxyribonuclease 7 small subunit (80 aa).

This sequence belongs to the XseB family. Heterooligomer composed of large and small subunits.

Its subcellular location is the cytoplasm. It catalyses the reaction Exonucleolytic cleavage in either 5'- to 3'- or 3'- to 5'-direction to yield nucleoside 5'-phosphates.. Its function is as follows. Bidirectionally degrades single-stranded DNA into large acid-insoluble oligonucleotides, which are then degraded further into small acid-soluble oligonucleotides. The polypeptide is Exodeoxyribonuclease 7 small subunit (Rickettsia massiliae (strain Mtu5)).